Reading from the N-terminus, the 105-residue chain is Photosystem II 5 kDa protein, chloroplastic (105 aa).

Residues 1-77 (MASITMTTSF…ICSVAGVATA (77 aa)) constitute a chloroplast transit peptide.

The maturation of the PSII-T precursor to its final form occurs through a two step process. First, a stromal intermediate is formed, which, upon translocation into the thylakoid membrane, is processed to the mature protein.

It localises to the plastid. The protein localises to the chloroplast thylakoid membrane. May be a component of the oxygen-evolving complex. The polypeptide is Photosystem II 5 kDa protein, chloroplastic (PSBT) (Gossypium hirsutum (Upland cotton)).